The following is a 318-amino-acid chain: Pyrimidine-specific ribonucleoside hydrolase RihA (318 aa).

Residue H240 is part of the active site.

The protein belongs to the IUNH family. RihA subfamily.

Hydrolyzes cytidine or uridine to ribose and cytosine or uracil, respectively. This chain is Pyrimidine-specific ribonucleoside hydrolase RihA, found in Shewanella baltica (strain OS155 / ATCC BAA-1091).